Here is a 293-residue protein sequence, read N- to C-terminus: MTSSIFRTIGIIGHSSYPKAINTYDVLYRWLYNKGIKVMIEQHASHLLRTHKAIIGNLHDIGDYADLAIVIGGDGNMLRAANVLSQYDIKIIGINLGNLGFLTDLNPHSALIELSKILSGHFINEKRFLLDIKIQHYNNVTILGTAINEVILYTNTIKNMIKFELYINNNFTFSSRSDGLIIATPTGSTAYALSAGGPILSPSVEGIVLVPICPHTVSSRPIIIDNKSTISLKFPKITPKLTIRCDNQNPIYIDKEKEIFIQRSNHILDLIHPNNYNYFKNLRIKLGWQKNSI.

Asp74 functions as the Proton acceptor in the catalytic mechanism. Residues 74-75 (DG), Arg79, 148-149 (NE), Arg176, Asp178, 189-194 (TAYALS), and Gln248 contribute to the NAD(+) site.

Belongs to the NAD kinase family. The cofactor is a divalent metal cation.

The protein resides in the cytoplasm. The enzyme catalyses NAD(+) + ATP = ADP + NADP(+) + H(+). Functionally, involved in the regulation of the intracellular balance of NAD and NADP, and is a key enzyme in the biosynthesis of NADP. Catalyzes specifically the phosphorylation on 2'-hydroxyl of the adenosine moiety of NAD to yield NADP. This Blochmanniella floridana protein is NAD kinase.